Reading from the N-terminus, the 169-residue chain is Lipoprotein signal peptidase (169 aa).

Residues M1–R9 lie on the Cytoplasmic side of the membrane. A helical transmembrane segment spans residues L10–F30. The Periplasmic portion of the chain corresponds to Q31–G67. The helical transmembrane segment at W68 to K89 threads the bilayer. Residues R90–T96 are Cytoplasmic-facing. The chain crosses the membrane as a helical span at residues W97–V118. At L119–N140 the chain is on the periplasmic side. Catalysis depends on residues D124 and D143. Residues L141–A154 traverse the membrane as a helical segment. The Cytoplasmic portion of the chain corresponds to L155–G169.

Belongs to the peptidase A8 family. Monomer in the crystal.

The protein localises to the cell inner membrane. The catalysed reaction is Release of signal peptides from bacterial membrane prolipoproteins. Hydrolyzes -Xaa-Yaa-Zaa-|-(S,diacylglyceryl)Cys-, in which Xaa is hydrophobic (preferably Leu), and Yaa (Ala or Ser) and Zaa (Gly or Ala) have small, neutral side chains.. The protein operates within protein modification; lipoprotein biosynthesis (signal peptide cleavage). Inhibited by globomycin. Functionally, this protein specifically catalyzes the removal of signal peptides from prolipoproteins. The polypeptide is Lipoprotein signal peptidase (Pseudomonas aeruginosa (strain ATCC 15692 / DSM 22644 / CIP 104116 / JCM 14847 / LMG 12228 / 1C / PRS 101 / PAO1)).